The primary structure comprises 759 residues: Protein transport protein sec23-1 (759 aa).

Cys-56, Cys-60, Cys-79, and Cys-82 together coordinate Zn(2+).

The protein belongs to the SEC23/SEC24 family. SEC23 subfamily. In terms of assembly, the COPII coat is composed of at least 5 proteins: the sec23/24 complex, the sec13/31 complex, and the protein sar1.

The protein resides in the cytoplasm. It localises to the cytoplasmic vesicle. It is found in the COPII-coated vesicle membrane. The protein localises to the endoplasmic reticulum membrane. Its subcellular location is the golgi apparatus membrane. Component of the coat protein complex II (COPII) which promotes the formation of transport vesicles from the endoplasmic reticulum (ER). The coat has two main functions, the physical deformation of the endoplasmic reticulum membrane into vesicles and the selection of cargo molecules. This chain is Protein transport protein sec23-1 (sec231), found in Schizosaccharomyces pombe (strain 972 / ATCC 24843) (Fission yeast).